We begin with the raw amino-acid sequence, 214 residues long: Attacin (214 aa).

The N-terminal stretch at 1-19 is a signal peptide; that stretch reads MSKSVALLLLCACLASGRH. Positions 20–26 are excised as a propeptide; sequence VPTRARR.

Belongs to the attacin/sarcotoxin-2 family. In terms of tissue distribution, highest expression in fat body and hemocytes and to a much lesser extent in Malpighian tubules, silk gland and midgut.

Its subcellular location is the secreted. Hemolymph antibacterial protein. Has a wide spectrum of activity against both Gram-positive and Gram-negative bacteria. In Bombyx mori (Silk moth), this protein is Attacin.